The primary structure comprises 423 residues: D-tagatose-1,6-bisphosphate aldolase subunit GatZ (423 aa).

It belongs to the GatZ/KbaZ family. GatZ subfamily. As to quaternary structure, forms a complex with GatY.

It functions in the pathway carbohydrate metabolism; D-tagatose 6-phosphate degradation; D-glyceraldehyde 3-phosphate and glycerone phosphate from D-tagatose 6-phosphate: step 2/2. Component of the tagatose-1,6-bisphosphate aldolase GatYZ that is required for full activity and stability of the Y subunit. Could have a chaperone-like function for the proper and stable folding of GatY. When expressed alone, GatZ does not show any aldolase activity. Is involved in the catabolism of galactitol. This is D-tagatose-1,6-bisphosphate aldolase subunit GatZ from Klebsiella pneumoniae subsp. pneumoniae (strain ATCC 700721 / MGH 78578).